Here is a 243-residue protein sequence, read N- to C-terminus: MSGHSKWHNIQGRKNAQDSKRGKIFQKLSRELYMAAKQGGPDPSGNPSLRLVMDKAKAANMPKDNIKRALDKASDRDAANYDEVTYEGYGPGGVAILVEALTDNRNRTSSTVRVAITRHGGNMAAAGAVSYMFDRKGYLVISRDDLDVDEDQMLEDALEAGAEDMQTSDEAFEIYTDPKEFAQVRDALEEKGYKFVQNELTMVPQNLTPIPEDKVEQFQAMIDQLEDDDDVQEVYTAGDWPDD.

The tract at residues 1 to 23 (MSGHSKWHNIQGRKNAQDSKRGK) is disordered.

It belongs to the TACO1 family.

Its subcellular location is the cytoplasm. This Lacticaseibacillus casei (strain BL23) (Lactobacillus casei) protein is Probable transcriptional regulatory protein LCABL_11860.